The sequence spans 446 residues: Corrinoid/iron-sulfur protein large subunit (446 aa).

One can recognise a 4Fe-4S domain in the interval 2-59 (PLTGLEIYKQLPKKNCGECGTPTCLAFAMNLASGKASLDSCPYVSDAAREALDAAAAP). The [4Fe-4S] cluster site is built by cysteine 17, cysteine 20, cysteine 25, and cysteine 42. Residues threonine 340, threonine 346, 370–373 (GLSV), and alanine 433 contribute to the 5-methoxybenzimidazolylcob(I)amide site.

Heterohexamer composed of 2 subunits of AcsC, 2 subunits of AcsD and 2 subunits of AcsE. [4Fe-4S] cluster is required as a cofactor.

In terms of biological role, acts as a methyl group carrier in the anaerobic acetyl-CoA pathway (Wood-Ljungdahl pathway) of carbon monoxide and carbon dioxide fixation. Binds the corrinoid 5-methoxybenzimidazolylcobamide which is then methylated by the AcsE subunit. The polypeptide is Corrinoid/iron-sulfur protein large subunit (acsC) (Moorella thermoacetica (Clostridium thermoaceticum)).